A 453-amino-acid polypeptide reads, in one-letter code: CBL-interacting protein kinase 24 (453 aa).

The Protein kinase domain maps to 18–271 (YEVGRTIGQG…IEQIREDTWF (254 aa)). Residues 24–32 (IGQGTFAKV) and lysine 47 each bind ATP. The active-site Proton acceptor is the aspartate 141. Positions 159 to 186 (DFGLSTLAQKGVGLLHTTCGTPNYVAPE) are activation loop. One can recognise an NAF domain in the interval 310 to 336 (NDGGPLVMNAFEMITLSQGLDLSALFD). The tract at residues 343–372 (KRQTRFVSRKPAKTIVATIEVVAETMGLKV) is PPI.

The protein belongs to the protein kinase superfamily. CAMK Ser/Thr protein kinase family. SNF1 subfamily. In terms of assembly, interacts with CBL4. Mn(2+) serves as cofactor.

It catalyses the reaction L-seryl-[protein] + ATP = O-phospho-L-seryl-[protein] + ADP + H(+). It carries out the reaction L-threonyl-[protein] + ATP = O-phospho-L-threonyl-[protein] + ADP + H(+). Functionally, involved in the regulatory pathway for the control of intracellular Na(+) and K(+) homeostasis and salt tolerance. Operates in synergy with CBL4 to activate the plasma membrane Na(+)/H(+) antiporter SOS1. CIPK serine-threonine protein kinases interact with CBL proteins. Binding of a CBL protein to the regulatory NAF domain of CIPK protein lead to the activation of the kinase in a calcium-dependent manner. The sequence is that of CBL-interacting protein kinase 24 (CIPK24) from Oryza sativa subsp. japonica (Rice).